Here is a 443-residue protein sequence, read N- to C-terminus: MHNTLFRTALLAAALGSFSHTASAEGVMVHLFEWKFNDIANECETVLGPKGFGGVQVSPPAEHKQGSQVWWTVYQPVSYKNFNSFGGCEAELRSMIARCNAAGVKVYADAVFNHMASGSGTATGGGSYNSGQYQYPQFGYNDFHHSGDITNYGDSNNVWNGALYGLPDLNTGSSYVQDQIATYMKTLLGWGVAGFRIDAAKHMAPADVKAILDKAGSPRAYLEVIGAGGESPDIQPGRYTYIDTVTEFKYGTDLAANFNGQIKNLKTLGESWGLLPSNKAFVFVDNHDPERAHGGGGMLTFMQGARYDLANTFMLAWPYGWKQVMSAYRFENMGTYETDKGAPGSTPCTDSQWNCEQRRPTIMNMVLFRNRTEGQPVSNWWDNGNNQIAFSRGTRASSPSTTRAARWWPRCRRSRPASTATSWGAMTTAAAVMSPSTAAARPA.

The N-terminal stretch at 1 to 24 (MHNTLFRTALLAAALGSFSHTASA) is a signal peptide. Residues His-114 and Arg-196 each contribute to the substrate site. Catalysis depends on Asp-198, which acts as the Nucleophile. Substrate is bound at residue 201-202 (KH). Catalysis depends on Glu-223, which acts as the Proton donor. Gly-228 and His-287 together coordinate substrate.

It belongs to the glycosyl hydrolase 13 family.

The protein resides in the secreted. The catalysed reaction is Endohydrolysis of (1-&gt;4)-alpha-D-glucosidic linkages in polysaccharides containing three or more (1-&gt;4)-alpha-linked D-glucose units.. The polypeptide is Alpha-amylase (amyA) (Aeromonas hydrophila).